A 120-amino-acid chain; its full sequence is Large ribosomal subunit protein uL18 (120 aa).

Belongs to the universal ribosomal protein uL18 family. In terms of assembly, part of the 50S ribosomal subunit; part of the 5S rRNA/L5/L18/L25 subcomplex. Contacts the 5S and 23S rRNAs.

Functionally, this is one of the proteins that bind and probably mediate the attachment of the 5S RNA into the large ribosomal subunit, where it forms part of the central protuberance. The protein is Large ribosomal subunit protein uL18 of Clostridium novyi (strain NT).